Reading from the N-terminus, the 197-residue chain is MLPLLQLVPAKLLNSSCSLEKTLQCSCSFHGIPTPSVQWWMGGVPVGVDGMDGSLQVTSTMLGPWANSTISLTEEPEMGMRLLCEGKNQNGTHALSILLMSRKSSLAAQAFVKGLIQGAIYAGIVIALLFLCLLPLIVKHIRKKQAKKAAAIRAKKSSKVRASQELEMSLKPEEPGKPVVATFSESRILEKQDKRAS.

A helical membrane pass occupies residues G118–V138. Residues V160–V179 are disordered. Basic and acidic residues predominate over residues A162–G176.

The protein localises to the membrane. This Homo sapiens (Human) protein is SIGLEC family-like protein 1 (SIGLECL1).